The sequence spans 119 residues: Acidic phospholipase A2 CM-II (119 aa).

Cystine bridges form between C11–C71, C26–C118, C28–C44, C43–C99, C50–C92, C60–C85, and C78–C90. Ca(2+) contacts are provided by F27, G29, and G31. Residue H47 is part of the active site. D48 lines the Ca(2+) pocket. D93 is a catalytic residue.

This sequence belongs to the phospholipase A2 family. Group I subfamily. D49 sub-subfamily. Ca(2+) serves as cofactor. As to expression, expressed by the venom gland.

It is found in the secreted. The enzyme catalyses a 1,2-diacyl-sn-glycero-3-phosphocholine + H2O = a 1-acyl-sn-glycero-3-phosphocholine + a fatty acid + H(+). Its function is as follows. PLA2 catalyzes the calcium-dependent hydrolysis of the 2-acyl groups in 3-sn-phosphoglycerides. The polypeptide is Acidic phospholipase A2 CM-II (Aspidelaps scutatus (Shield-nose snake)).